The sequence spans 163 residues: UPF0478 protein SAB1599c (163 aa).

The helical transmembrane segment at I7 to L27 threads the bilayer.

It belongs to the UPF0478 family.

It is found in the cell membrane. This is UPF0478 protein SAB1599c from Staphylococcus aureus (strain bovine RF122 / ET3-1).